A 510-amino-acid chain; its full sequence is Maturase K (510 aa).

Belongs to the intron maturase 2 family. MatK subfamily.

It is found in the plastid. The protein resides in the chloroplast. In terms of biological role, usually encoded in the trnK tRNA gene intron. Probably assists in splicing its own and other chloroplast group II introns. The chain is Maturase K from Thuja plicata (Western red-cedar).